Consider the following 69-residue polypeptide: Large ribosomal subunit protein uL29 (69 aa).

Belongs to the universal ribosomal protein uL29 family.

The sequence is that of Large ribosomal subunit protein uL29 from Sulfolobus acidocaldarius (strain ATCC 33909 / DSM 639 / JCM 8929 / NBRC 15157 / NCIMB 11770).